Reading from the N-terminus, the 88-residue chain is Small ribosomal subunit protein bS20 (88 aa).

Belongs to the bacterial ribosomal protein bS20 family.

In terms of biological role, binds directly to 16S ribosomal RNA. The polypeptide is Small ribosomal subunit protein bS20 (Micrococcus luteus (strain ATCC 4698 / DSM 20030 / JCM 1464 / CCM 169 / CCUG 5858 / IAM 1056 / NBRC 3333 / NCIMB 9278 / NCTC 2665 / VKM Ac-2230) (Micrococcus lysodeikticus)).